The primary structure comprises 209 residues: N-(5'-phosphoribosyl)anthranilate isomerase (209 aa).

This sequence belongs to the TrpF family.

The enzyme catalyses N-(5-phospho-beta-D-ribosyl)anthranilate = 1-(2-carboxyphenylamino)-1-deoxy-D-ribulose 5-phosphate. Its pathway is amino-acid biosynthesis; L-tryptophan biosynthesis; L-tryptophan from chorismate: step 3/5. This is N-(5'-phosphoribosyl)anthranilate isomerase from Erythrobacter litoralis (strain HTCC2594).